Reading from the N-terminus, the 469-residue chain is Glutamine synthetase (469 aa).

The GS beta-grasp domain maps to 15-96 (NDVKFIDVRF…INFFIHDPIT (82 aa)). Residues 104-469 (PRNIAKKAEA…PHEFELYFDI (366 aa)) enclose the GS catalytic domain. Mg(2+) contacts are provided by Glu-129 and Glu-131. Glu-205 contributes to the ATP binding site. Mg(2+)-binding residues include Glu-210 and Glu-218. 221–223 (YKF) serves as a coordination point for ATP. L-glutamate-binding positions include 262–263 (NG) and Gly-263. His-267 contributes to the Mg(2+) binding site. Residues 269–271 (HQS) and Ser-271 contribute to the ATP site. Arg-320, Glu-326, and Arg-338 together coordinate L-glutamate. Residues Arg-338, Arg-343, and Lys-352 each coordinate ATP. A Mg(2+)-binding site is contributed by Glu-357. Arg-359 is an L-glutamate binding site. Tyr-397 is subject to O-AMP-tyrosine.

The protein belongs to the glutamine synthetase family. Oligomer of 12 subunits arranged in the form of two hexagons. The cofactor is Mg(2+).

It localises to the cytoplasm. It carries out the reaction L-glutamate + NH4(+) + ATP = L-glutamine + ADP + phosphate + H(+). With respect to regulation, the activity of this enzyme could be controlled by adenylation under conditions of abundant glutamine. In terms of biological role, catalyzes the ATP-dependent biosynthesis of glutamine from glutamate and ammonia. This Streptomyces filamentosus (Streptomyces roseosporus) protein is Glutamine synthetase.